Consider the following 285-residue polypeptide: Probable endonuclease 4 (285 aa).

The Zn(2+) site is built by H69, H109, E145, D179, H182, H216, D229, H231, and E261.

The protein belongs to the AP endonuclease 2 family. Zn(2+) serves as cofactor.

The catalysed reaction is Endonucleolytic cleavage to 5'-phosphooligonucleotide end-products.. Functionally, endonuclease IV plays a role in DNA repair. It cleaves phosphodiester bonds at apurinic or apyrimidinic (AP) sites, generating a 3'-hydroxyl group and a 5'-terminal sugar phosphate. The sequence is that of Probable endonuclease 4 from Escherichia coli O81 (strain ED1a).